A 260-amino-acid polypeptide reads, in one-letter code: Exosome complex component Rrp42 (260 aa).

Belongs to the RNase PH family. Rrp42 subfamily. In terms of assembly, component of the archaeal exosome complex. Forms a hexameric ring-like arrangement composed of 3 Rrp41-Rrp42 heterodimers. The hexameric ring associates with a trimer of Rrp4 and/or Csl4 subunits.

It localises to the cytoplasm. Non-catalytic component of the exosome, which is a complex involved in RNA degradation. Contributes to the structuring of the Rrp41 active site. The sequence is that of Exosome complex component Rrp42 from Thermoplasma volcanium (strain ATCC 51530 / DSM 4299 / JCM 9571 / NBRC 15438 / GSS1).